Reading from the N-terminus, the 340-residue chain is S-adenosylmethionine:tRNA ribosyltransferase-isomerase (340 aa).

This sequence belongs to the QueA family. In terms of assembly, monomer.

The protein localises to the cytoplasm. The enzyme catalyses 7-aminomethyl-7-carbaguanosine(34) in tRNA + S-adenosyl-L-methionine = epoxyqueuosine(34) in tRNA + adenine + L-methionine + 2 H(+). The protein operates within tRNA modification; tRNA-queuosine biosynthesis. Functionally, transfers and isomerizes the ribose moiety from AdoMet to the 7-aminomethyl group of 7-deazaguanine (preQ1-tRNA) to give epoxyqueuosine (oQ-tRNA). This is S-adenosylmethionine:tRNA ribosyltransferase-isomerase from Vesicomyosocius okutanii subsp. Calyptogena okutanii (strain HA).